Here is a 229-residue protein sequence, read N- to C-terminus: Ribonuclease 3 (229 aa).

The 130-residue stretch at 4 to 133 (WEELQESVGF…FIGALYLDNG (130 aa)) folds into the RNase III domain. E46 provides a ligand contact to Mg(2+). The active site involves D50. Residues D119 and E122 each contribute to the Mg(2+) site. The active site involves E122. The DRBM domain occupies 159 to 228 (DYKTQLQEIV…AQFAINQLTH (70 aa)).

It belongs to the ribonuclease III family. In terms of assembly, homodimer. It depends on Mg(2+) as a cofactor.

It localises to the cytoplasm. It carries out the reaction Endonucleolytic cleavage to 5'-phosphomonoester.. Functionally, digests double-stranded RNA. Involved in the processing of primary rRNA transcript to yield the immediate precursors to the large and small rRNAs (23S and 16S). Processes some mRNAs, and tRNAs when they are encoded in the rRNA operon. Processes pre-crRNA and tracrRNA of type II CRISPR loci if present in the organism. The polypeptide is Ribonuclease 3 (Listeria welshimeri serovar 6b (strain ATCC 35897 / DSM 20650 / CCUG 15529 / CIP 8149 / NCTC 11857 / SLCC 5334 / V8)).